The primary structure comprises 111 residues: Fluoride-specific ion channel FluC 3 (111 aa).

3 consecutive transmembrane segments (helical) span residues Ile26 to Phe46, Val53 to Tyr73, and Ile91 to Leu111. Positions 63 and 66 each coordinate Na(+).

This sequence belongs to the fluoride channel Fluc/FEX (TC 1.A.43) family.

The protein resides in the cell membrane. It catalyses the reaction fluoride(in) = fluoride(out). Na(+) is not transported, but it plays an essential structural role and its presence is essential for fluoride channel function. Its function is as follows. Fluoride-specific ion channel. Important for reducing fluoride concentration in the cell, thus reducing its toxicity. In Methanosarcina acetivorans (strain ATCC 35395 / DSM 2834 / JCM 12185 / C2A), this protein is Fluoride-specific ion channel FluC 3.